A 95-amino-acid chain; its full sequence is Hiracin-JM79 immunity factor (95 aa).

Imparts immunity to bacteriocin hiracin-JM79 to naturally sensitive host strains. In Enterococcus hirae, this protein is Hiracin-JM79 immunity factor.